Here is a 169-residue protein sequence, read N- to C-terminus: uncharacterized protein (169 aa).

Serine 165 bears the Phosphoserine mark.

This is an uncharacterized protein from Drosophila melanogaster (Fruit fly).